The primary structure comprises 398 residues: Alpha-2,8-sialyltransferase 8F (398 aa).

Over M1 to P3 the chain is Cytoplasmic. A helical; Signal-anchor for type II membrane protein membrane pass occupies residues G4 to W24. The Lumenal segment spans residues C25 to A398. N66, N93, N151, and N196 each carry an N-linked (GlcNAc...) asparagine glycan. Cystine bridges form between C186-C335 and C200-C395. Substrate-binding positions include N214, N236–S238, and S322–G324. The active-site Proton donor/acceptor is the H370.

The protein belongs to the glycosyltransferase 29 family.

The protein resides in the golgi apparatus membrane. The enzyme catalyses a ganglioside GM3 + CMP-N-acetyl-beta-neuraminate = a ganglioside GD3 + CMP + H(+). It catalyses the reaction a ganglioside GM3 (d18:1(4E)) + CMP-N-acetyl-beta-neuraminate = a ganglioside GD3 (d18:1(4E)) + CMP + H(+). The catalysed reaction is a ganglioside GD1a (d18:1(4E)) + CMP-N-acetyl-beta-neuraminate = a ganglioside GT1a (d18:1(4E)) + CMP + H(+). It carries out the reaction a ganglioside GD1a + CMP-N-acetyl-beta-neuraminate = a ganglioside GT1a + CMP + H(+). The enzyme catalyses a ganglioside GM1b (d18:1(4E)) + CMP-N-acetyl-beta-neuraminate = a ganglioside GD1c (d18:1(4E)) + CMP + H(+). It catalyses the reaction a ganglioside GM1b + CMP-N-acetyl-beta-neuraminate = a ganglioside GD1c + CMP + H(+). The catalysed reaction is a ganglioside GM4 (d18:1(4E)) + CMP-N-acetyl-beta-neuraminate = an N-acetyl-alpha-neuraminosyl-(2-&gt;8)-N-acetyl-alpha-neuraminosyl-(2-&gt;3)-beta-D-galactosyl-(1&lt;-&gt;1')-N-acylsphing-4-enine + CMP + H(+). It carries out the reaction N-acetyl-alpha-neuraminosyl-(2-&gt;3)-beta-D-galactosyl-(1&lt;-&gt;1')-ceramide + CMP-N-acetyl-beta-neuraminate = N-acetyl-alpha-neuraminosyl-(2-&gt;8)-N-acetyl-alpha-neuraminosyl-(2-&gt;3)-beta-D-galactosyl-(1&lt;-&gt;1')-ceramide + CMP + H(+). The enzyme catalyses a ganglioside GT1b (d18:1(4E)) + CMP-N-acetyl-beta-neuraminate = a ganglioside GQ1b (d18:1(4E)) + CMP + H(+). It catalyses the reaction a ganglioside GT1b + CMP-N-acetyl-beta-neuraminate = a ganglioside GQ1b + CMP + H(+). It participates in protein modification; protein glycosylation. Its function is as follows. Alpha-2,8-sialyltransferase that prefers O-glycans to N-glycans or glycolipids as acceptor substrates. The minimal acceptor substrate is the NeuAc-alpha-2,3(6)-Gal sequence at the non-reducing end of their carbohydrate groups. The protein is Alpha-2,8-sialyltransferase 8F (ST8SIA6) of Pan troglodytes (Chimpanzee).